The chain runs to 379 residues: Retron Se72 reverse transcriptase (379 aa).

Residues 1–245 (MNKPRFNGTP…SKLSVTGLWV (245 aa)) form the Reverse transcriptase domain. Positions 109, 188, and 189 each coordinate Mg(2+).

The protein belongs to the bacterial reverse transcriptase family.

The enzyme catalyses DNA(n) + a 2'-deoxyribonucleoside 5'-triphosphate = DNA(n+1) + diphosphate. Functionally, reverse transcriptase (RT) component of antiviral defense system retron Se72, composed of a non-coding RNA (ncRNA), this reverse transcriptase (RT) and the following cold shock-like protein. Expression of retron Se72 confers protection against bacteriophage lambda. At multiplicity of infection (MOI) of 0.02 cultures slow growth when infected with lambda but do not collapse, at MOI 2 cultures enter growth stasis. Responsible for synthesis of msDNA (a branched molecule with RNA linked by a 2',5'-phosphodiester bond to ssDNA). The retron transcript serves as primer (from a conserved internal G residue) and template for the reaction, and codes for the RT. The DNA segment is predicted to be 72 bases long. The polypeptide is Retron Se72 reverse transcriptase (Salmonella heidelberg (strain 579083-10)).